A 466-amino-acid chain; its full sequence is Ribulose bisphosphate carboxylase large chain (466 aa).

Lysine 5 carries the post-translational modification N6,N6,N6-trimethyllysine. Positions 114 and 164 each coordinate substrate. Lysine 166 (proton acceptor) is an active-site residue. Lysine 168 serves as a coordination point for substrate. Residues lysine 192, aspartate 194, and glutamate 195 each contribute to the Mg(2+) site. An N6-carboxylysine modification is found at lysine 192. The active-site Proton acceptor is the histidine 285. Residues arginine 286, histidine 318, and serine 370 each contribute to the substrate site.

It belongs to the RuBisCO large chain family. Type I subfamily. Heterohexadecamer of 8 large chains and 8 small chains; disulfide-linked. The disulfide link is formed within the large subunit homodimers. Requires Mg(2+) as cofactor. In terms of processing, the disulfide bond which can form in the large chain dimeric partners within the hexadecamer appears to be associated with oxidative stress and protein turnover.

It is found in the plastid. It localises to the chloroplast. The enzyme catalyses 2 (2R)-3-phosphoglycerate + 2 H(+) = D-ribulose 1,5-bisphosphate + CO2 + H2O. It catalyses the reaction D-ribulose 1,5-bisphosphate + O2 = 2-phosphoglycolate + (2R)-3-phosphoglycerate + 2 H(+). In terms of biological role, ruBisCO catalyzes two reactions: the carboxylation of D-ribulose 1,5-bisphosphate, the primary event in carbon dioxide fixation, as well as the oxidative fragmentation of the pentose substrate in the photorespiration process. Both reactions occur simultaneously and in competition at the same active site. The protein is Ribulose bisphosphate carboxylase large chain of Vitis aestivalis (Grape).